The following is a 404-amino-acid chain: Cysteine desulfurase IscS (404 aa).

Pyridoxal 5'-phosphate-binding positions include 75–76 (AT), Asn155, Gln183, and 203–205 (SAH). Position 206 is an N6-(pyridoxal phosphate)lysine (Lys206). Pyridoxal 5'-phosphate is bound at residue Thr243. Cys328 functions as the Cysteine persulfide intermediate in the catalytic mechanism. Cys328 serves as a coordination point for [2Fe-2S] cluster.

The protein belongs to the class-V pyridoxal-phosphate-dependent aminotransferase family. NifS/IscS subfamily. In terms of assembly, homodimer. Forms a heterotetramer with IscU, interacts with other sulfur acceptors. Pyridoxal 5'-phosphate is required as a cofactor.

The protein resides in the cytoplasm. The enzyme catalyses (sulfur carrier)-H + L-cysteine = (sulfur carrier)-SH + L-alanine. The protein operates within cofactor biosynthesis; iron-sulfur cluster biosynthesis. Master enzyme that delivers sulfur to a number of partners involved in Fe-S cluster assembly, tRNA modification or cofactor biosynthesis. Catalyzes the removal of elemental sulfur atoms from cysteine to produce alanine. Functions as a sulfur delivery protein for Fe-S cluster synthesis onto IscU, an Fe-S scaffold assembly protein, as well as other S acceptor proteins. This is Cysteine desulfurase IscS from Aeromonas salmonicida (strain A449).